The following is a 448-amino-acid chain: Death-associated protein kinase 3 (448 aa).

Residues 13-275 (YEMGEELGSG…IAQSLEHSWI (263 aa)) enclose the Protein kinase domain. Residues 19-27 (LGSGQFAIV) and Lys-42 contribute to the ATP site. Asp-139 serves as the catalytic Proton acceptor. Residues 161–204 (DFGIAHRIEAGSEFKNIFGTPEFVAPEIVNYEPLGLEADMWSIG) are activation segment. Residues Thr-180 and Thr-225 each carry the phosphothreonine modification. A Phosphothreonine; by autocatalysis modification is found at Thr-265. At Thr-265 the chain carries Phosphothreonine; by ROCK1. At Ser-304 the chain carries Phosphoserine; by DAPK1. Ser-306 is modified (phosphoserine; by autocatalysis and DAPK1). A phosphoserine; by DAPK1 mark is found at Ser-307, Ser-313, and Ser-321. The interval 390–448 (AQEEARAALLGAGGLKRRLCRLENRYDALAAQVAAEVQFVRDLVRALEQERLQAECGVR) is interaction with CDC5L. The tract at residues 422–436 (VAAEVQFVRDLVRAL) is leucine-zipper.

The protein belongs to the protein kinase superfamily. CAMK Ser/Thr protein kinase family. DAP kinase subfamily. In terms of assembly, homooligomer in its kinase-active form (homotrimers and homodimers are reported); monomeric in its kinase-inactive form. Homodimerization is required for activation segment autophosphorylation. Interacts with DAXX, PAWR, ATF4, NLK, TCF7L2, UBE2D1, UBE2D2, UBE2D3, and CDC5L. Interacts with AR; enhanced by AATF. Interacts with LUZP1; the interaction is likely to occur throughout the cell cycle and reduces the LUZP1-mediated suppression of MYL9 phosphorylation. The cofactor is Mg(2+). In terms of processing, ubiquitinated. Ubiquitination mediated by the UBE2D3 E3 ligase does not lead to proteasomal degradation, but influences promyelocytic leukemia protein nuclear bodies (PML-NBs) formation in the nucleus. Post-translationally, the phosphorylation status is critical for kinase activity, oligomerization and intracellular localization. Phosphorylation at Thr-180, Thr-225 and Thr-265 is essential for activity. The phosphorylated form is localized in the cytoplasm and nuclear translocation or retention is maximal when it is not phosphorylated. Phosphorylation increases the trimeric form, and its dephosphorylation favors a kinase-inactive monomeric form. Highly expressed in heart, brain, lung, skeletal muscle, kidney and testis. Lower levels in liver and spleen.

It localises to the nucleus. It is found in the PML body. The protein resides in the cytoplasm. Its subcellular location is the cytoskeleton. The protein localises to the microtubule organizing center. It localises to the centrosome. It is found in the chromosome. The protein resides in the centromere. Its subcellular location is the spindle. The protein localises to the midbody. The catalysed reaction is L-seryl-[protein] + ATP = O-phospho-L-seryl-[protein] + ADP + H(+). It carries out the reaction L-threonyl-[protein] + ATP = O-phospho-L-threonyl-[protein] + ADP + H(+). With respect to regulation, a sequential activation is proposed: autophosphorylation at consensus sites is leading to dimerization of the catalytic domain and activation segment exchange (producing an active confirmation of both kinase modules in trans) followed by phosphorylation at Thr-180 in the activation segment and at other regulatory sites. Phosphorylation at Thr-180, Thr-225 and Thr-265 is essential for activity. Inhibited by pyridone 6 (K00225), a potent, ATP-competitive inhibitor. Phosphorylation at Thr-180, Thr-225 and Thr-265 is essential for activity. Its function is as follows. Serine/threonine kinase which is involved in the regulation of apoptosis, autophagy, transcription, translation and actin cytoskeleton reorganization. Regulates both type I (caspase-dependent) apoptotic and type II (caspase-independent) autophagic cell deaths signal, depending on the cellular setting. Involved in formation of promyelocytic leukemia protein nuclear body (PML-NB). Involved in apoptosis involving PAWR which mediates cytoplasmic relocation; in vitro phosphorylates PAWR. Regulates myosin phosphorylation in both smooth muscle and non-muscle cells. In smooth muscle, regulates myosin either directly by phosphorylating MYL12B and MYL9 or through inhibition of smooth muscle myosin phosphatase (SMPP1M) via phosphorylation of PPP1R12A; the inhibition of SMPP1M functions to enhance muscle responsiveness to Ca(2+) and promote a contractile state. Phosphorylates MYL12B in non-muscle cells leading to reorganization of actin cytoskeleton such as in regulation of cell polarity and cell migration. Positively regulates canonical Wnt/beta-catenin signaling through interaction with NLK and TCF7L2; disrupts the NLK-TCF7L2 complex thereby influencing the phosphorylation of TCF7L2 by NLK. Phosphorylates STAT3 and enhances its transcriptional activity. Enhances transcription from AR-responsive promoters in a hormone- and kinase-dependent manner. Phosphorylates histone H3 on 'Thr-11' at centromeres during mitosis. Phosphorylates RPL13A on 'Ser-77' upon interferon-gamma activation which is causing RPL13A release from the ribosome, RPL13A association with the GAIT complex and its subsequent involvement in transcript-selective translation inhibition. The sequence is that of Death-associated protein kinase 3 (Dapk3) from Mus musculus (Mouse).